Reading from the N-terminus, the 463-residue chain is Fumarate hydratase class II (463 aa).

Substrate-binding positions include Ser97 to Thr99, His128 to Asp131, Ser138 to Asn140, and Thr186. The active-site Proton donor/acceptor is the His187. Ser317 is a catalytic residue. Substrate is bound by residues Ser318 and Lys323–Asn325.

The protein belongs to the class-II fumarase/aspartase family. Fumarase subfamily. Homotetramer.

It localises to the cytoplasm. It catalyses the reaction (S)-malate = fumarate + H2O. It functions in the pathway carbohydrate metabolism; tricarboxylic acid cycle; (S)-malate from fumarate: step 1/1. Functionally, involved in the TCA cycle. Catalyzes the stereospecific interconversion of fumarate to L-malate. The polypeptide is Fumarate hydratase class II (Campylobacter jejuni subsp. jejuni serotype O:2 (strain ATCC 700819 / NCTC 11168)).